We begin with the raw amino-acid sequence, 205 residues long: Guanylate kinase (205 aa).

A Guanylate kinase-like domain is found at 3-181; sequence GSLYIISAPS…ALSELHSIFL (179 aa). 10–17 lines the ATP pocket; that stretch reads APSGAGKT.

The protein belongs to the guanylate kinase family.

It localises to the cytoplasm. It catalyses the reaction GMP + ATP = GDP + ADP. Functionally, essential for recycling GMP and indirectly, cGMP. The sequence is that of Guanylate kinase from Hydrogenovibrio crunogenus (strain DSM 25203 / XCL-2) (Thiomicrospira crunogena).